Here is a 427-residue protein sequence, read N- to C-terminus: Glutamate-1-semialdehyde 2,1-aminomutase (427 aa).

Residue lysine 265 is modified to N6-(pyridoxal phosphate)lysine.

This sequence belongs to the class-III pyridoxal-phosphate-dependent aminotransferase family. HemL subfamily. In terms of assembly, homodimer. Pyridoxal 5'-phosphate serves as cofactor.

The protein localises to the cytoplasm. The catalysed reaction is (S)-4-amino-5-oxopentanoate = 5-aminolevulinate. Its pathway is porphyrin-containing compound metabolism; protoporphyrin-IX biosynthesis; 5-aminolevulinate from L-glutamyl-tRNA(Glu): step 2/2. This chain is Glutamate-1-semialdehyde 2,1-aminomutase, found in Burkholderia lata (strain ATCC 17760 / DSM 23089 / LMG 22485 / NCIMB 9086 / R18194 / 383).